The primary structure comprises 215 residues: UPF0126 membrane protein DR_2368 (215 aa).

Helical transmembrane passes span 15–35 (LHWLDLIGVLAFAMSGALLGV), 39–59 (FDLFGVLVLGAVTAVGGGAIR), 75–95 (TYLWTALLGALLAFAFGERLA), 101–121 (LSLFDSAGLALFATSGALGAI), 123–143 (IGLGPLGVVFAGMLSGVGGGI), and 162–182 (LYATAAAAGAGAVWLLAPHFT).

The protein belongs to the UPF0126 family.

It is found in the cell membrane. This Deinococcus radiodurans (strain ATCC 13939 / DSM 20539 / JCM 16871 / CCUG 27074 / LMG 4051 / NBRC 15346 / NCIMB 9279 / VKM B-1422 / R1) protein is UPF0126 membrane protein DR_2368.